A 212-amino-acid chain; its full sequence is Pyridoxine/pyridoxamine 5'-phosphate oxidase (212 aa).

Substrate contacts are provided by residues 8-11 and K66; that span reads RRSY. FMN-binding positions include 61-66, 76-77, R82, K83, and Q105; these read RIVLLK and FT. Y123, R127, and S131 together coordinate substrate. Residues 140-141 and W184 contribute to the FMN site; that span reads QS. Substrate is bound at residue 190-192; the sequence is RLH. An FMN-binding site is contributed by R194.

Belongs to the pyridoxamine 5'-phosphate oxidase family. As to quaternary structure, homodimer. The cofactor is FMN.

It catalyses the reaction pyridoxamine 5'-phosphate + O2 + H2O = pyridoxal 5'-phosphate + H2O2 + NH4(+). The enzyme catalyses pyridoxine 5'-phosphate + O2 = pyridoxal 5'-phosphate + H2O2. The protein operates within cofactor metabolism; pyridoxal 5'-phosphate salvage; pyridoxal 5'-phosphate from pyridoxamine 5'-phosphate: step 1/1. It functions in the pathway cofactor metabolism; pyridoxal 5'-phosphate salvage; pyridoxal 5'-phosphate from pyridoxine 5'-phosphate: step 1/1. Its function is as follows. Catalyzes the oxidation of either pyridoxine 5'-phosphate (PNP) or pyridoxamine 5'-phosphate (PMP) into pyridoxal 5'-phosphate (PLP). The sequence is that of Pyridoxine/pyridoxamine 5'-phosphate oxidase from Cupriavidus necator (strain ATCC 17699 / DSM 428 / KCTC 22496 / NCIMB 10442 / H16 / Stanier 337) (Ralstonia eutropha).